A 268-amino-acid polypeptide reads, in one-letter code: 4-hydroxy-tetrahydrodipicolinate reductase (268 aa).

NAD(+) contacts are provided by residues 8-13 (GACGKM), D34, 95-97 (GTT), and 121-124 (APNF). H151 functions as the Proton donor/acceptor in the catalytic mechanism. H152 provides a ligand contact to (S)-2,3,4,5-tetrahydrodipicolinate. The active-site Proton donor is K155. 161-162 (GT) contributes to the (S)-2,3,4,5-tetrahydrodipicolinate binding site.

The protein belongs to the DapB family.

The protein resides in the cytoplasm. It catalyses the reaction (S)-2,3,4,5-tetrahydrodipicolinate + NAD(+) + H2O = (2S,4S)-4-hydroxy-2,3,4,5-tetrahydrodipicolinate + NADH + H(+). The enzyme catalyses (S)-2,3,4,5-tetrahydrodipicolinate + NADP(+) + H2O = (2S,4S)-4-hydroxy-2,3,4,5-tetrahydrodipicolinate + NADPH + H(+). The protein operates within amino-acid biosynthesis; L-lysine biosynthesis via DAP pathway; (S)-tetrahydrodipicolinate from L-aspartate: step 4/4. Catalyzes the conversion of 4-hydroxy-tetrahydrodipicolinate (HTPA) to tetrahydrodipicolinate. This is 4-hydroxy-tetrahydrodipicolinate reductase from Dictyoglomus turgidum (strain DSM 6724 / Z-1310).